A 128-amino-acid polypeptide reads, in one-letter code: Glycine cleavage system H protein (128 aa).

The Lipoyl-binding domain maps to 23-105 (IGIVGITWFA…YGEGWILKLE (83 aa)). Position 64 is an N6-lipoyllysine (lysine 64).

The protein belongs to the GcvH family. In terms of assembly, the glycine cleavage system is composed of four proteins: P, T, L and H. It depends on (R)-lipoate as a cofactor.

Functionally, the glycine cleavage system catalyzes the degradation of glycine. The H protein shuttles the methylamine group of glycine from the P protein to the T protein. In Symbiobacterium thermophilum (strain DSM 24528 / JCM 14929 / IAM 14863 / T), this protein is Glycine cleavage system H protein.